Reading from the N-terminus, the 849-residue chain is MEAGETWNVSLEWPPPSLDLSTITQTPSTIVGSGIPLNYAGLSLIVIPLITLLGNLLVIISVLRYRALQSAINFLILGLAVADLLVAIIVMPYAVYVYVTNGDWYLGNLMCDIYMASDVCCSTASILLLAVISFDRYRAVSLPIQYSRQSQNVKRVWTLIAVIWLVSLTLASPMVFGVNVRPPDANPYECRFYNAEFSILSSMISFVIPCFLVLFVYIRIIIALKKREKAAKMRREKNTIAHGLTMRPDTGEEQVDEEAAGRIVAGPVVNVMMAALPSMTRRMRQFERHRRAIELAGDEEWEEDELDVMDECCGGDDAGDDDDDYHADNGQGVVEASAPRTTSMLRRIINAASVGTANSTAQSVASASGMPAFFAQNISTTSPSSSSCARTTTTTSAIPKASGDLPLPMLLNEREFGNSSTPRSSLESLSENVNVITNDFVSENCTTFSRRSSYADDSQPTSSQTSSGDGRSYSIKGQKRFRNLSRNYSTKHHRKVVKVNRGNSRNNSRTASITNQSDDALIPAIIRTISRKSPRLFRRDKTDIKKHSMILANPITEPPKEYRRVSMPIHPTNSQTETETISASRDIENLPTTTISRSTTANSAELLGSPDDFEKFPALITETVLEDVLAETREGCFMQPTVSFALTVREMEGNALNNLKGCSVESSRRVSQVDPPLAIQILTRPSLPHLDLQRMDSIGTTCSSKTRADSLRSVDSKGSKKSNRNGIAVKLVKRAIKHEHSLKRKVSKAQRKEKRATKTLGVVVGVFLVCWVPFFVINILNAVCILLNKDSCQVGYDLFFYCTWIGYMNSFMNPIIYTIFNTEFRRAFKSIIFGRNSTRHHFSNKQAHV.

The Extracellular segment spans residues 1-39 (MEAGETWNVSLEWPPPSLDLSTITQTPSTIVGSGIPLNY). A glycan (N-linked (GlcNAc...) asparagine) is linked at Asn-8. A helical transmembrane segment spans residues 40–60 (AGLSLIVIPLITLLGNLLVII). Topologically, residues 61 to 70 (SVLRYRALQS) are cytoplasmic. The chain crosses the membrane as a helical span at residues 71–91 (AINFLILGLAVADLLVAIIVM). The Extracellular portion of the chain corresponds to 92 to 112 (PYAVYVYVTNGDWYLGNLMCD). A disulfide bridge connects residues Cys-111 and Cys-190. Residues 113-133 (IYMASDVCCSTASILLLAVIS) form a helical membrane-spanning segment. The Cytoplasmic portion of the chain corresponds to 134 to 155 (FDRYRAVSLPIQYSRQSQNVKR). A helical transmembrane segment spans residues 156–176 (VWTLIAVIWLVSLTLASPMVF). The Extracellular segment spans residues 177–203 (GVNVRPPDANPYECRFYNAEFSILSSM). The tract at residues 183 to 849 (PDANPYECRF…HHFSNKQAHV (667 aa)) is required for the interaction with gpa-14. A helical membrane pass occupies residues 204–224 (ISFVIPCFLVLFVYIRIIIAL). The Cytoplasmic segment spans residues 225–759 (KKREKAAKMR…QRKEKRATKT (535 aa)). Residues 450–515 (RRSSYADDSQ…NNSRTASITN (66 aa)) form a disordered region. Positions 457 to 470 (DSQPTSSQTSSGDG) are enriched in low complexity. Residues 477–498 (GQKRFRNLSRNYSTKHHRKVVK) show a composition bias toward basic residues. The segment covering 501-515 (RGNSRNNSRTASITN) has biased composition (polar residues). A helical transmembrane segment spans residues 760–780 (LGVVVGVFLVCWVPFFVINIL). The Extracellular portion of the chain corresponds to 781 to 798 (NAVCILLNKDSCQVGYDL). A helical transmembrane segment spans residues 799 to 819 (FFYCTWIGYMNSFMNPIIYTI). Residues 820 to 849 (FNTEFRRAFKSIIFGRNSTRHHFSNKQAHV) lie on the Cytoplasmic side of the membrane.

Belongs to the G-protein coupled receptor 1 family. Interacts (via C-terminus) with the G-alpha protein gpa-14; the interaction is direct. In terms of tissue distribution, expressed in all dopaminergic neurons. Expressed in neurons around the nerve ring and the posterior side of the body including PDE neurons. In hermaphrodites, expressed in the head and tail ganglia including in the RIA interneuron pair, and in a subset of sublateral interneurons and the PDA neuron in the tail. Expressed in cholinergic SIA neurons. Also expressed in the male tail. In males, expressed in the dorsal spicule protractor, ventral spicule protractor, dorsal spicule retractor and ventral spicule retractor muscles and the sensory post-cloacal sensilla B (PCB) neuron. In males, expressed in the sensory hook neurons HOA.

The protein resides in the cell membrane. Functionally, G-protein coupled receptor which binds to the neurotransmitter dopamine with high affinity leading to the activation of an associated G-protein and downstream signaling pathways. Couples to G-proteins to inhibit adenylate cyclase (AC) activity and cAMP production. Inhibits synaptic vesicle fusion to negatively regulate the release of dopamine at dopaminergic neuron synapses. Antagonizes octopamine signaling in response to food by promoting the dopamine-mediated suppression of crh-1/CREB1 transcription factor activation in cholinergic SIA neurons. This is most likely in association with the G(o)-alpha G-protein subunit goa-1. In association with the G-alpha protein gpa-14, modulates two types of learning behavior: touch habituation and chemosensory associative conditioning. May act partly via tsp-17 to negatively regulate dopamine reuptake transporter dat-1 activity. Plays a role in behavioral plasticity and regulates the decision-making process when conflicting alternatives are present. Promotes male mating behavior by antagonizing acetylcholine signaling to control the protrusions of copulatory spicules from the tail of males during hermaphrodite vulval location. Modulates unc-7 activity at gap junctions to promote inhibitory neuronal signaling transduction between chemosensory and mechanosensory neurons, and thus ensures spicule insertion attempts are confined to the hermaphrodite vulva during copulation. G-protein coupled receptor which binds to the neurotransmitter dopamine with high affinity leading to the activation of an associated G-protein and downstream signaling pathways. Couples to G-proteins to inhibit adenylate cyclase (AC) activity and cAMP production. In Caenorhabditis elegans, this protein is Dopamine receptor 2.